Reading from the N-terminus, the 468-residue chain is 6-phosphogluconate dehydrogenase, decarboxylating (468 aa).

NADP(+) contacts are provided by residues 10–15 (GMAVMG), 33–35 (NRS), 74–76 (VKA), and asparagine 102. Substrate contacts are provided by residues asparagine 102 and 128–130 (SGG). Catalysis depends on lysine 183, which acts as the Proton acceptor. Position 186–187 (186–187 (HN)) interacts with substrate. The active-site Proton donor is glutamate 190. Positions 191, 260, 287, 445, and 451 each coordinate substrate.

It belongs to the 6-phosphogluconate dehydrogenase family. In terms of assembly, homodimer.

The enzyme catalyses 6-phospho-D-gluconate + NADP(+) = D-ribulose 5-phosphate + CO2 + NADPH. Its pathway is carbohydrate degradation; pentose phosphate pathway; D-ribulose 5-phosphate from D-glucose 6-phosphate (oxidative stage): step 3/3. In terms of biological role, catalyzes the oxidative decarboxylation of 6-phosphogluconate to ribulose 5-phosphate and CO(2), with concomitant reduction of NADP to NADPH. The polypeptide is 6-phosphogluconate dehydrogenase, decarboxylating (gnd) (Klebsiella pneumoniae).